We begin with the raw amino-acid sequence, 280 residues long: Mitochondrial outer membrane protein porin 2 (280 aa).

Belongs to the eukaryotic mitochondrial porin (TC 1.B.8.1) family. As to expression, expressed in roots, stems, leaves, palea, lemma and pollen.

It is found in the mitochondrion outer membrane. In terms of biological role, forms a channel through the mitochondrial outer membrane that allows diffusion of small hydrophilic molecules. The channel adopts an open conformation at low or zero membrane potential and a closed conformation at potentials above 30-40 mV. The open state has a weak anion selectivity whereas the closed state is cation-selective. The chain is Mitochondrial outer membrane protein porin 2 (VDAC2) from Oryza sativa subsp. japonica (Rice).